A 212-amino-acid polypeptide reads, in one-letter code: Thymidylate kinase (212 aa).

10-17 (GLEGAGKS) lines the ATP pocket.

Belongs to the thymidylate kinase family.

The catalysed reaction is dTMP + ATP = dTDP + ADP. In terms of biological role, phosphorylation of dTMP to form dTDP in both de novo and salvage pathways of dTTP synthesis. The protein is Thymidylate kinase of Vibrio cholerae serotype O1 (strain ATCC 39541 / Classical Ogawa 395 / O395).